Here is a 357-residue protein sequence, read N- to C-terminus: UDP-N-acetylglucosamine--N-acetylmuramyl-(pentapeptide) pyrophosphoryl-undecaprenol N-acetylglucosamine transferase (357 aa).

UDP-N-acetyl-alpha-D-glucosamine contacts are provided by residues 11–13, Asn-123, Arg-159, Ser-187, Ile-241, 260–265, and Gln-286; these read TGG and ALTVAE.

Belongs to the glycosyltransferase 28 family. MurG subfamily.

The protein resides in the cell inner membrane. It catalyses the reaction di-trans,octa-cis-undecaprenyl diphospho-N-acetyl-alpha-D-muramoyl-L-alanyl-D-glutamyl-meso-2,6-diaminopimeloyl-D-alanyl-D-alanine + UDP-N-acetyl-alpha-D-glucosamine = di-trans,octa-cis-undecaprenyl diphospho-[N-acetyl-alpha-D-glucosaminyl-(1-&gt;4)]-N-acetyl-alpha-D-muramoyl-L-alanyl-D-glutamyl-meso-2,6-diaminopimeloyl-D-alanyl-D-alanine + UDP + H(+). It functions in the pathway cell wall biogenesis; peptidoglycan biosynthesis. Cell wall formation. Catalyzes the transfer of a GlcNAc subunit on undecaprenyl-pyrophosphoryl-MurNAc-pentapeptide (lipid intermediate I) to form undecaprenyl-pyrophosphoryl-MurNAc-(pentapeptide)GlcNAc (lipid intermediate II). In Aromatoleum aromaticum (strain DSM 19018 / LMG 30748 / EbN1) (Azoarcus sp. (strain EbN1)), this protein is UDP-N-acetylglucosamine--N-acetylmuramyl-(pentapeptide) pyrophosphoryl-undecaprenol N-acetylglucosamine transferase.